A 351-amino-acid polypeptide reads, in one-letter code: sn-1 oleoyl-lipid 12-desaturase (351 aa).

The tract at residues 1–20 (MTLSIVKSEDSSSRPSAVPS) is disordered. The next 2 membrane-spanning stretches (helical) occupy residues 44-62 (AWMT…WLGI) and 68-88 (FLLP…FVIG). Residues 89–93 (HDCGH) carry the Histidine box-1 motif. A helical transmembrane segment spans residues 100–120 (VWVNDWVGHILFLPIIYPFHS). A Histidine box-2 motif is present at residues 125–129 (HNQHH). 2 consecutive transmembrane segments (helical) span residues 199-219 (LLVI…IGVW) and 221-241 (FVKF…TFTL). The short motif at 289–293 (HHVTT) is the Histidine box-3 element.

This sequence belongs to the fatty acid desaturase type 2 family. The cofactor is Fe(2+).

Its subcellular location is the cellular thylakoid membrane. The enzyme catalyses a 1-[(9Z)-octadecenoyl]-2-acyl-glycerolipid + 2 reduced [2Fe-2S]-[ferredoxin] + O2 + 2 H(+) = a 1-[(9Z,12Z)-octadecdienoyl]-2-acyl-glycerolipid + 2 oxidized [2Fe-2S]-[ferredoxin] + 2 H2O. Its pathway is lipid metabolism; polyunsaturated fatty acid biosynthesis. Desaturase involved in fatty acid biosynthesis. Introduces a double bond at carbon 12 of oleoyl groups (18:1) attached to the sn-1 position of the glycerol moiety of membrane glycerolipids. The chain is sn-1 oleoyl-lipid 12-desaturase from Arthrospira platensis (Spirulina platensis).